Reading from the N-terminus, the 567-residue chain is MTINGWIQILVFCGIIILLVKPLGGYMTRVFGGERTLLSPVLVPVERGLYRLAGTTEREEQHWTTYAASLLLFNLAGFLLLYMLQRFQGSLPFNPMGMSDVPADLAFNTTASFVTNTNWQNYGGESTMSYLTQMAGLTVQNFVSAATGVAIAIALIRAFSRKSMKTLGNFWVDLTRCTLYVLLPLCIILTLAFVSLGVPQTIGVYAEATTLEGARQVIALGPVASQLAIKMLGTNGGGFFNANSAHPFENPDAISNMIQMVAIFAIGASLTNVFGRMVGNERQGWAIFAAMGILFVAGVAICYWAEAAGNPLIHALSVDGGNMEGKETRFGIAMSALFAVVTTAASCGAVIAMHDSMMALGGMIPMINMMLGEIIIGGVGAGFYGIVLFVVVAVFVAGLMVGRTPEYLGKKIEAKEVKMAMLAVLCLPLSILGFTAIASVIPTGLASIANPGPHGFSEILYAYTSGTANNGSAFGGLSGNTPWYNITIGLAMLMGRFLVILPAMAIAGSLVAKKAAPQSAGTFPTTGPLFVGLLIGVILVVGGLIFFPALALGPIAEHLAMIKGQMF.

11 consecutive transmembrane segments (helical) span residues 5 to 25 (GWIQILVFCGIIILLVKPLGG), 64 to 84 (TTYAASLLLFNLAGFLLLYML), 136 to 156 (GLTVQNFVSAATGVAIAIALI), 179 to 199 (LYVLLPLCIILTLAFVSLGVP), 254 to 274 (ISNMIQMVAIFAIGASLTNVF), 285 to 305 (WAIFAAMGILFVAGVAICYWA), 332 to 352 (IAMSALFAVVTTAASCGAVIA), 359 to 376 (ALGGMIPMINMMLGEIII), 421 to 441 (MLAVLCLPLSILGFTAIASVI), 486 to 506 (ITIGLAMLMGRFLVILPAMAI), and 529 to 549 (LFVGLLIGVILVVGGLIFFPA).

The protein belongs to the KdpA family. In terms of assembly, the system is composed of three essential subunits: KdpA, KdpB and KdpC.

The protein localises to the cell inner membrane. In terms of biological role, part of the high-affinity ATP-driven potassium transport (or Kdp) system, which catalyzes the hydrolysis of ATP coupled with the electrogenic transport of potassium into the cytoplasm. This subunit binds the periplasmic potassium ions and delivers the ions to the membrane domain of KdpB through an intramembrane tunnel. The sequence is that of Potassium-transporting ATPase potassium-binding subunit from Brucella anthropi (strain ATCC 49188 / DSM 6882 / CCUG 24695 / JCM 21032 / LMG 3331 / NBRC 15819 / NCTC 12168 / Alc 37) (Ochrobactrum anthropi).